The primary structure comprises 261 residues: CD40 ligand (261 aa).

Over Met-1–Lys-22 the chain is Cytoplasmic. Residues Ile-23–Leu-46 form a helical; Signal-anchor for type II membrane protein membrane-spanning segment. Residues His-47 to Leu-261 are Extracellular-facing. One can recognise a THD domain in the interval Ile-122–Leu-261. Cysteines 178 and 218 form a disulfide. Asn-240 carries N-linked (GlcNAc...) asparagine glycosylation.

The protein belongs to the tumor necrosis factor family. Homotrimer. Interacts with CD28. CD40 ligand, soluble form: Exists as either a monomer or a homotrimer. Forms a ternary complex between CD40 and integrins for CD40-CD40LG signaling. The soluble form derives from the membrane form by proteolytic processing.

The protein resides in the cell membrane. Its subcellular location is the cell surface. It is found in the secreted. Cytokine that acts as a ligand to CD40/TNFRSF5. Costimulates T-cell proliferation and cytokine production. Its cross-linking on T-cells generates a costimulatory signal which enhances the production of IL4 and IL10 in conjunction with the TCR/CD3 ligation and CD28 costimulation. Induces the activation of NF-kappa-B. Induces the activation of kinases MAPK8 and PAK2 in T-cells. Mediates B-cell proliferation in the absence of co-stimulus as well as IgE production in the presence of IL4. Involved in immunoglobulin class switching. Its function is as follows. Acts as a ligand for integrins, specifically ITGA5:ITGB1 and ITGAV:ITGB3; both integrins and the CD40 receptor are required for activation of CD40-CD40LG signaling, which have cell-type dependent effects, such as B-cell activation, NF-kappa-B signaling and anti-apoptotic signaling. In Bos taurus (Bovine), this protein is CD40 ligand (CD40LG).